A 344-amino-acid polypeptide reads, in one-letter code: L-rhamnose-proton symporter (344 aa).

A run of 10 helical transmembrane segments spans residues 4-24 (AITM…CFYA), 38-58 (WSVG…ALLL), 68-88 (FSLS…IGNI), 101-121 (MGIG…TPII), 137-157 (TLLG…AGQL), 175-195 (LVLA…MNAA), 214-234 (LPSY…FCFI), 259-279 (VLLS…YAWG), 290-310 (ISWM…GLVL), and 323-343 (VLSL…IGMA).

The protein belongs to the L-rhamnose transporter (TC 2.A.7.6) family.

The protein resides in the cell inner membrane. The enzyme catalyses L-rhamnopyranose(in) + H(+)(in) = L-rhamnopyranose(out) + H(+)(out). Uptake of L-rhamnose across the cytoplasmic membrane with the concomitant transport of protons into the cell (symport system). The sequence is that of L-rhamnose-proton symporter from Escherichia coli O9:H4 (strain HS).